We begin with the raw amino-acid sequence, 396 residues long: CCA-adding enzyme (396 aa).

2 residues coordinate ATP: Gly-32 and Arg-35. CTP is bound by residues Gly-32 and Arg-35. Residues Asp-45 and Asp-47 each contribute to the Mg(2+) site. Residues Arg-116, Asp-159, Arg-162, Arg-165, and Arg-168 each contribute to the ATP site. Residues Arg-116, Asp-159, Arg-162, Arg-165, and Arg-168 each contribute to the CTP site.

Belongs to the tRNA nucleotidyltransferase/poly(A) polymerase family. Bacterial CCA-adding enzyme type 3 subfamily. As to quaternary structure, homodimer. Requires Mg(2+) as cofactor.

The catalysed reaction is a tRNA precursor + 2 CTP + ATP = a tRNA with a 3' CCA end + 3 diphosphate. It catalyses the reaction a tRNA with a 3' CCA end + 2 CTP + ATP = a tRNA with a 3' CCACCA end + 3 diphosphate. In terms of biological role, catalyzes the addition and repair of the essential 3'-terminal CCA sequence in tRNAs without using a nucleic acid template. Adds these three nucleotides in the order of C, C, and A to the tRNA nucleotide-73, using CTP and ATP as substrates and producing inorganic pyrophosphate. tRNA 3'-terminal CCA addition is required both for tRNA processing and repair. Also involved in tRNA surveillance by mediating tandem CCA addition to generate a CCACCA at the 3' terminus of unstable tRNAs. While stable tRNAs receive only 3'-terminal CCA, unstable tRNAs are marked with CCACCA and rapidly degraded. This is CCA-adding enzyme from Lactobacillus delbrueckii subsp. bulgaricus (strain ATCC BAA-365 / Lb-18).